Here is a 478-residue protein sequence, read N- to C-terminus: Sialidase-4 (478 aa).

Positions 22 to 25 (YRVP) match the FRIP motif motif. Substrate-binding residues include arginine 23 and arginine 43. Active-site proton acceptor residues include aspartate 47 and aspartate 48. The BNR 1 repeat unit spans residues 127–138 (VTSCDAGLTWGS). Positions 177 and 179 each coordinate substrate. One copy of the BNR 2 repeat lies at 200–211 (FYSDDHGISWHC). Glutamate 222 and arginine 238 together coordinate substrate. One copy of the BNR 3 repeat lies at 247–258 (ALSADEGTSFLP). Disordered stretches follow at residues 285 to 307 (IEPQ…CFNL) and 335 to 359 (SRSP…PECP). Arginine 383 provides a ligand contact to substrate. The active-site Nucleophile is tyrosine 413. Residue glutamate 434 is part of the active site.

Belongs to the glycosyl hydrolase 33 family. As to expression, highly expressed in brain, particularly in hippocampus, and at lower levels in liver and spleen. Expressed in hippocampal neurons (at protein level).

Its subcellular location is the cell membrane. It is found in the endoplasmic reticulum membrane. The protein localises to the microsome membrane. It localises to the mitochondrion inner membrane. The protein resides in the mitochondrion outer membrane. Its subcellular location is the cell projection. It is found in the neuron projection. The protein localises to the lysosome lumen. The catalysed reaction is Hydrolysis of alpha-(2-&gt;3)-, alpha-(2-&gt;6)-, alpha-(2-&gt;8)- glycosidic linkages of terminal sialic acid residues in oligosaccharides, glycoproteins, glycolipids, colominic acid and synthetic substrates.. It carries out the reaction a ganglioside GM3 + H2O = a beta-D-galactosyl-(1-&gt;4)-beta-D-glucosyl-(1&lt;-&gt;1)-ceramide + N-acetylneuraminate. It catalyses the reaction a ganglioside GM3 (d18:1(4E)) + H2O = a beta-D-Gal-(1-&gt;4)-beta-D-Glc-(1&lt;-&gt;1)-Cer(d18:1(4E)) + N-acetylneuraminate. The enzyme catalyses a ganglioside GM2 + H2O = a ganglioside GA2 + N-acetylneuraminate. The catalysed reaction is a ganglioside GM2 (d18:1(4E)) + H2O = a ganglioside GA2 (d18:1(4E)) + N-acetylneuraminate. It carries out the reaction a ganglioside GD1a + H2O = a ganglioside GM1 + N-acetylneuraminate. It catalyses the reaction a ganglioside GD1a (d18:1(4E)) + H2O = a ganglioside GM1 (d18:1(4E)) + N-acetylneuraminate. The enzyme catalyses a ganglioside GD3 + H2O = a ganglioside GM3 + N-acetylneuraminate. The catalysed reaction is a ganglioside GD3 (d18:1(4E)) + H2O = a ganglioside GM3 (d18:1(4E)) + N-acetylneuraminate. In terms of biological role, exo-alpha-sialidase that catalyzes the hydrolytic cleavage of the terminal sialic acid (N-acetylneuraminic acid, Neu5Ac) of a glycan moiety in the catabolism of glycolipids, glycoproteins and oligosacharides. Efficiently hydrolyzes gangliosides including alpha-(2-&gt;3)-sialylated GD1a and GM3 and alpha-(2-&gt;8)-sialylated GD3. Hydrolyzes poly-alpha-(2-&gt;8)-sialylated neural cell adhesion molecule NCAM1 likely at growth cones, suppressing neurite outgrowth in hippocampal neurons. May desialylate sialyl Lewis A and X antigens at the cell surface, down-regulating these glycan epitopes recognized by SELE/E selectin in the initiation of cell adhesion and extravasation. Has sialidase activity toward mucin, fetuin and sialyllactose. The protein is Sialidase-4 (Neu4) of Mus musculus (Mouse).